A 99-amino-acid polypeptide reads, in one-letter code: uncharacterized protein (99 aa).

The first 17 residues, 1–17 (MMMNAFFPAMALMVLVG), serve as a signal peptide directing secretion. Cysteine 18 carries N-palmitoyl cysteine lipidation. Cysteine 18 carries the S-diacylglycerol cysteine lipid modification.

It localises to the cell membrane. This is an uncharacterized protein from Shigella flexneri.